Reading from the N-terminus, the 355-residue chain is Uroporphyrinogen decarboxylase (355 aa).

Substrate is bound by residues 27–31, D77, Y154, T209, and H328; that span reads RQAGR.

The protein belongs to the uroporphyrinogen decarboxylase family. As to quaternary structure, homodimer.

Its subcellular location is the cytoplasm. It catalyses the reaction uroporphyrinogen III + 4 H(+) = coproporphyrinogen III + 4 CO2. It participates in porphyrin-containing compound metabolism; protoporphyrin-IX biosynthesis; coproporphyrinogen-III from 5-aminolevulinate: step 4/4. Catalyzes the decarboxylation of four acetate groups of uroporphyrinogen-III to yield coproporphyrinogen-III. This Aliivibrio salmonicida (strain LFI1238) (Vibrio salmonicida (strain LFI1238)) protein is Uroporphyrinogen decarboxylase.